The chain runs to 144 residues: Transcriptional regulator SlyA (144 aa).

The region spanning 2 to 135 (ESPLGSDLAR…LITLIAKLEH (134 aa)) is the HTH marR-type domain. The segment at residues 49–72 (QIQLAKAIGIEQPSLVRTLDQLEE) is a DNA-binding region (H-T-H motif).

The protein belongs to the SlyA family. In terms of assembly, homodimer.

Transcription regulator that can specifically activate or repress expression of target genes. The chain is Transcriptional regulator SlyA from Escherichia coli (strain 55989 / EAEC).